We begin with the raw amino-acid sequence, 400 residues long: D-alanyl-D-alanine carboxypeptidase DacC (400 aa).

A signal peptide spans 1-27 (MTQYSSLLRGLAAGSAFLFLFAPTAFA). The Acyl-ester intermediate role is filled by Ser-66. Catalysis depends on Lys-69, which acts as the Proton acceptor. Ser-132 is a catalytic residue. Residue Lys-235 coordinates substrate. The required for inner membrane binding stretch occupies residues 383–400 (VWDFVMMKFHQWFGSWFS).

It belongs to the peptidase S11 family.

The protein localises to the cell inner membrane. The enzyme catalyses Preferential cleavage: (Ac)2-L-Lys-D-Ala-|-D-Ala. Also transpeptidation of peptidyl-alanyl moieties that are N-acyl substituents of D-alanine.. The protein operates within cell wall biogenesis; peptidoglycan biosynthesis. In terms of biological role, removes C-terminal D-alanyl residues from sugar-peptide cell wall precursors. The protein is D-alanyl-D-alanine carboxypeptidase DacC (dacC) of Escherichia coli (strain K12).